Consider the following 37-residue polypeptide: Large ribosomal subunit protein bL36 (37 aa).

It belongs to the bacterial ribosomal protein bL36 family.

This is Large ribosomal subunit protein bL36 from Streptomyces griseus subsp. griseus (strain JCM 4626 / CBS 651.72 / NBRC 13350 / KCC S-0626 / ISP 5235).